The chain runs to 185 residues: TATA-box-binding protein (185 aa).

A run of 2 repeats spans residues 3-78 (IQNI…REDL) and 94-176 (IQNI…AEKI).

It belongs to the TBP family.

In terms of biological role, general factor that plays a role in the activation of archaeal genes transcribed by RNA polymerase. Binds specifically to the TATA box promoter element which lies close to the position of transcription initiation. In Methanopyrus kandleri (strain AV19 / DSM 6324 / JCM 9639 / NBRC 100938), this protein is TATA-box-binding protein.